Consider the following 1173-residue polypeptide: DNA polymerase catalytic subunit (1173 aa).

2 disordered regions span residues 554–625 and 1123–1144; these read PSLP…SASG and EGPG…PPRK. A compositionally biased stretch (gly residues) spans 564–578; the sequence is GGDGAGLEGGDGGTA. The segment covering 591–606 has biased composition (acidic residues); it reads DGEDEDDPEGGDEGEN. A compositionally biased stretch (basic and acidic residues) spans 607–618; it reads GECRENGLEKEG. Positions 1123-1138 are enriched in gly residues; that stretch reads EGPGRGEGLGVGGGEG.

Belongs to the DNA polymerase type-B family.

It localises to the host nucleus. The catalysed reaction is DNA(n) + a 2'-deoxyribonucleoside 5'-triphosphate = DNA(n+1) + diphosphate. This is DNA polymerase catalytic subunit (UL54) from Rattus.